The following is a 596-amino-acid chain: Aspartate--tRNA(Asp/Asn) ligase (596 aa).

L-aspartate is bound at residue glutamate 175. The interval glutamine 199 to lysine 202 is aspartate. Positions 221 and 454 each coordinate L-aspartate. An ATP-binding site is contributed by arginine 221–glutamate 223. Position 488 (glutamate 488) interacts with ATP. An L-aspartate-binding site is contributed by arginine 495. Position 540–543 (glycine 540–arginine 543) interacts with ATP.

Belongs to the class-II aminoacyl-tRNA synthetase family. Type 1 subfamily. Homodimer.

The protein localises to the cytoplasm. The enzyme catalyses tRNA(Asx) + L-aspartate + ATP = L-aspartyl-tRNA(Asx) + AMP + diphosphate. Functionally, aspartyl-tRNA synthetase with relaxed tRNA specificity since it is able to aspartylate not only its cognate tRNA(Asp) but also tRNA(Asn). Reaction proceeds in two steps: L-aspartate is first activated by ATP to form Asp-AMP and then transferred to the acceptor end of tRNA(Asp/Asn). The polypeptide is Aspartate--tRNA(Asp/Asn) ligase (Mesorhizobium japonicum (strain LMG 29417 / CECT 9101 / MAFF 303099) (Mesorhizobium loti (strain MAFF 303099))).